The sequence spans 98 residues: Feather beta keratin (98 aa).

Residue Ser2 is modified to N-acetylserine.

This sequence belongs to the avian keratin family. In terms of assembly, the avian keratins (F-ker, S-ker, C-ker and B-ker) are a complex mixture of very similar polypeptides.

The polypeptide is Feather beta keratin (Cathartes aura (Turkey vulture)).